A 55-amino-acid chain; its full sequence is DNA-directed RNA polymerase subunit Rpo10 (55 aa).

Residues C6, C9, C43, and C44 each coordinate Zn(2+).

This sequence belongs to the archaeal Rpo10/eukaryotic RPB10 RNA polymerase subunit family. In terms of assembly, part of the RNA polymerase complex. The cofactor is Zn(2+).

It localises to the cytoplasm. The enzyme catalyses RNA(n) + a ribonucleoside 5'-triphosphate = RNA(n+1) + diphosphate. DNA-dependent RNA polymerase (RNAP) catalyzes the transcription of DNA into RNA using the four ribonucleoside triphosphates as substrates. In Methanothermobacter thermautotrophicus (strain ATCC 29096 / DSM 1053 / JCM 10044 / NBRC 100330 / Delta H) (Methanobacterium thermoautotrophicum), this protein is DNA-directed RNA polymerase subunit Rpo10.